Here is a 395-residue protein sequence, read N- to C-terminus: MLGRSRLALVLLAAAVSCAVAQHAPPWTEDCRKSTYPPSGPTYRGPAPWYTINLDLPPYKRWHELMVDKAPMLKVIVNSLKNMVNTFVPSGKVMQIVDEKLPGLLGNFPGPFEEEMKGIAAVTDIPLGEIISYNIFYEFFTLCTSIVAEDKKGHLIHGRNMDFGVFLGWNINNDTWVITEELKPLTVNLDFQRNNKTVFKASSFAGYVGMLTGFKPGLFSLTLNERFSVNGGYLGILEWILGKKDAMWIGFLTRTVLENSTSYEEAKNILTKTKILAPAYFILGGNQSGEGCVITRDRKESLDVYELDAKQGRWYVVQTNYDRWKNPFFLDDRRTPAKMCLNRTTQENISFENMYDVLSTKPVLNKLTVFTTLIDVTKDQFETYMRDCPDPCIGW.

The first 21 residues, 1 to 21 (MLGRSRLALVLLAAAVSCAVA), serve as a signal peptide directing secretion. Cysteines 31 and 340 form a disulfide. Cys143 functions as the Nucleophile in the catalytic mechanism. N-linked (GlcNAc...) asparagine glycans are attached at residues Asn173, Asn195, Asn259, Asn286, Asn342, and Asn348. An intrachain disulfide couples Cys388 to Cys392.

The protein belongs to the acid ceramidase family. In terms of assembly, heterodimer; disulfide-linked. The heterodimer is composed of the disulfide-linked alpha and beta chains produced by autocatalytic cleavage of the precursor. N-glycosylated. Post-translationally, proteolytically cleaved into two chains alpha and beta that remain associated via a disulfide bond. Cleavage gives rise to a conformation change that activates the enzyme. The same catalytic Cys residue mediates the autoproteolytic cleavage and subsequent hydrolysis of lipid substrates. The beta chain may undergo an additional C-terminal processing.

The protein resides in the lysosome. Its subcellular location is the secreted. It carries out the reaction an N-acylsphing-4-enine + H2O = sphing-4-enine + a fatty acid. The enzyme catalyses N-dodecanoylsphing-4-enine + H2O = dodecanoate + sphing-4-enine. The catalysed reaction is N-tetradecanoylsphing-4-enine + H2O = tetradecanoate + sphing-4-enine. It catalyses the reaction N-hexadecanoylsphing-4-enine + H2O = sphing-4-enine + hexadecanoate. It carries out the reaction N-octadecanoylsphing-4-enine + H2O = sphing-4-enine + octadecanoate. The enzyme catalyses N-dodecanoyl-(4R)-hydroxysphinganine + H2O = (4R)-hydroxysphinganine + dodecanoate. The catalysed reaction is N-(dodecanoyl)-sphinganine + H2O = dodecanoate + sphinganine. It catalyses the reaction N-(acetyl)-sphing-4-enine + H2O = sphing-4-enine + acetate. It carries out the reaction N-(hexanoyl)sphing-4-enine + H2O = hexanoate + sphing-4-enine. The enzyme catalyses N-octanoylsphing-4-enine + H2O = octanoate + sphing-4-enine. The catalysed reaction is N-(9Z-octadecenoyl)-sphing-4-enine + H2O = sphing-4-enine + (9Z)-octadecenoate. It catalyses the reaction N-dodecanoylethanolamine + H2O = dodecanoate + ethanolamine. Its pathway is lipid metabolism; sphingolipid metabolism. Lysosomal ceramidase that hydrolyzes sphingolipid ceramides into sphingosine and free fatty acids at acidic pH. Ceramides, sphingosine, and its phosphorylated form sphingosine-1-phosphate are bioactive lipids that mediate cellular signaling pathways regulating several biological processes including cell proliferation, apoptosis and differentiation. Has a higher catalytic efficiency towards C12-ceramides versus other ceramides. Also catalyzes the reverse reaction allowing the synthesis of ceramides from fatty acids and sphingosine. For the reverse synthetic reaction, the natural sphingosine D-erythro isomer is more efficiently utilized as a substrate compared to D-erythro-dihydrosphingosine and D-erythro-phytosphingosine, while the fatty acids with chain lengths of 12 or 14 carbons are the most efficiently used. Also has an N-acylethanolamine hydrolase activity. By regulating the levels of ceramides, sphingosine and sphingosine-1-phosphate in the epidermis, mediates the calcium-induced differentiation of epidermal keratinocytes. Also indirectly regulates tumor necrosis factor/TNF-induced apoptosis. By regulating the intracellular balance between ceramides and sphingosine, in adrenocortical cells, probably also acts as a regulator of steroidogenesis. The sequence is that of Acid ceramidase from Macaca fascicularis (Crab-eating macaque).